We begin with the raw amino-acid sequence, 213 residues long: Kynurenine formamidase (213 aa).

Residue Trp18 participates in substrate binding. His48, His52, and Asp54 together coordinate Zn(2+). His58 functions as the Proton donor/acceptor in the catalytic mechanism. Positions 160 and 172 each coordinate Zn(2+).

Belongs to the Cyclase 1 superfamily. KynB family. As to quaternary structure, homodimer. Requires Zn(2+) as cofactor.

It catalyses the reaction N-formyl-L-kynurenine + H2O = L-kynurenine + formate + H(+). The protein operates within amino-acid degradation; L-tryptophan degradation via kynurenine pathway; L-kynurenine from L-tryptophan: step 2/2. Functionally, catalyzes the hydrolysis of N-formyl-L-kynurenine to L-kynurenine, the second step in the kynurenine pathway of tryptophan degradation. The sequence is that of Kynurenine formamidase from Burkholderia cenocepacia (strain HI2424).